The chain runs to 541 residues: Chaperonin GroEL (541 aa).

Residues 29-32 (TIGP), 86-90 (DGTTT), glycine 413, and aspartate 494 contribute to the ATP site.

The protein belongs to the chaperonin (HSP60) family. Forms a cylinder of 14 subunits composed of two heptameric rings stacked back-to-back. Interacts with the co-chaperonin GroES.

It localises to the cytoplasm. The enzyme catalyses ATP + H2O + a folded polypeptide = ADP + phosphate + an unfolded polypeptide.. Its function is as follows. Together with its co-chaperonin GroES, plays an essential role in assisting protein folding. The GroEL-GroES system forms a nano-cage that allows encapsulation of the non-native substrate proteins and provides a physical environment optimized to promote and accelerate protein folding. The chain is Chaperonin GroEL from Lachnospira eligens (strain ATCC 27750 / DSM 3376 / VPI C15-48 / C15-B4) (Eubacterium eligens).